A 232-amino-acid polypeptide reads, in one-letter code: Cobalt transport protein CbiM (232 aa).

6 consecutive transmembrane segments (helical) span residues 6–26 (GFLP…FVVH), 43–63 (LLLG…LPSV), 84–104 (IMAV…AHGG), 107–127 (TLGA…YGVY), 135–155 (VPLM…TYCV), and 181–201 (IFAV…VIVM).

It belongs to the CbiM family. Forms an energy-coupling factor (ECF) transporter complex composed of an ATP-binding protein (A component, CbiO), a transmembrane protein (T component, CbiQ) and 2 possible substrate-capture proteins (S components, CbiM and CbiN) of unknown stoichimetry.

It is found in the cell membrane. It functions in the pathway cofactor biosynthesis; adenosylcobalamin biosynthesis. In terms of biological role, part of the energy-coupling factor (ECF) transporter complex CbiMNOQ involved in cobalt import. The sequence is that of Cobalt transport protein CbiM from Streptomyces coelicolor (strain ATCC BAA-471 / A3(2) / M145).